Here is a 455-residue protein sequence, read N- to C-terminus: Zinc finger protein ZPR1 homolog (455 aa).

C4-type zinc fingers lie at residues 28–60 and 247–279; these read CPVCEEDGETRIMCTSIPYYRAVILMSFECPHC and CPNCHGPTEVKMKPTDIPFFQTVIIMSLACDRC.

The protein belongs to the ZPR1 family.

The protein localises to the nucleus. The chain is Zinc finger protein ZPR1 homolog from Caenorhabditis elegans.